A 530-amino-acid polypeptide reads, in one-letter code: Proline--tRNA ligase, cytoplasmic (530 aa).

Belongs to the class-II aminoacyl-tRNA synthetase family.

The protein resides in the cytoplasm. Its subcellular location is the cytosol. The enzyme catalyses tRNA(Pro) + L-proline + ATP = L-prolyl-tRNA(Pro) + AMP + diphosphate. Catalyzes the attachment of proline to tRNA(Pro) in a two-step reaction: proline is first activated by ATP to form Pro-AMP and then transferred to the acceptor end of tRNA(Pro). The chain is Proline--tRNA ligase, cytoplasmic from Arabidopsis thaliana (Mouse-ear cress).